The following is a 611-amino-acid chain: Adenosylhomocysteinase 3 (611 aa).

Composition is skewed to low complexity over residues 1 to 14 (MSVQ…AAKV), 36 to 57 (AAVG…APAA), and 68 to 81 (GPAA…GKVP). The segment at 1–184 (MSVQVVSAAA…KQQKNSKGSS (184 aa)) is disordered. S2 is subject to N-acetylserine. Residues 2 to 109 (SVQVVSAAAA…DGGEALVSPD (108 aa)) form an LISN domain, inhibits interaction with ITPR1 region. S107 carries the post-translational modification Phosphoserine. Over residues 135–144 (RPTKIGRRSL) the composition is skewed to basic residues. The span at 145–164 (SRSISQSSTDSYSSAASYTD) shows a compositional bias: low complexity. S149, S152, S155, and S158 each carry phosphoserine. Substrate is bound by residues T236, D310, and E335. 336 to 338 (SVT) contacts NAD(+). Substrate-binding residues include K365 and D369. NAD(+) is bound by residues N370, 401-406 (GEVGKG), E422, N457, 478-479 (MG), and N525.

The protein belongs to the adenosylhomocysteinase family. In terms of assembly, homotetramer. Forms heteromultimers with AHCYL1 (via the C-terminal region). Interacts with ITPR1; with lower affinity than AHCYL1 and maybe via ITPR1. Interacts with SLC4A4. Interacts with ZCCHC4. NAD(+) serves as cofactor. Post-translationally, phosphorylated during neuronal differentiation at the LISN domain.

The protein resides in the cytoplasm. It localises to the microsome. The catalysed reaction is S-adenosyl-L-homocysteine + H2O = L-homocysteine + adenosine. Its pathway is amino-acid biosynthesis; L-homocysteine biosynthesis; L-homocysteine from S-adenosyl-L-homocysteine: step 1/1. Functionally, may regulate the electrogenic sodium/bicarbonate cotransporter SLC4A4 activity and Mg(2+)-sensitivity. On the contrary of its homolog AHCYL1, does not regulate ITPR1 sensitivity to inositol 1,4,5-trisphosphate. This chain is Adenosylhomocysteinase 3 (AHCYL2), found in Homo sapiens (Human).